The sequence spans 467 residues: Retinoic acid receptor RXR-alpha (467 aa).

The interval M1–I112 is disordered. The modulating domain stretch occupies residues M1–I139. K4 participates in a covalent cross-link: Glycyl lysine isopeptide (Lys-Gly) (interchain with G-Cter in SUMO2). Over residues F11–G25 the composition is skewed to polar residues. 2 positions are modified to phosphoserine: S22 and S28. The segment covering P32 to L52 has biased composition (low complexity). Residues S54 to I63 show a composition bias toward polar residues. Phosphoserine; by MAPK8 and MAPK9 occurs at positions 61 and 75. The segment covering S83–T109 has biased composition (polar residues). At T87 the chain carries Phosphothreonine; by MAPK8 and MAPK9. A Glycyl lysine isopeptide (Lys-Gly) (interchain with G-Cter in SUMO) cross-link involves residue K113. S134 is subject to Phosphoserine. 2 residues coordinate Zn(2+): C140 and C143. Residues C140–C160 form an NR C4-type zinc finger. The nuclear receptor DNA-binding region spans C140 to M205. The residue at position 150 (K150) is an N6-acetyllysine. Zn(2+) is bound by residues C157 and C160. The interval K165–K170 is nuclear localization signal. Positions 176, 182, 192, and 195 each coordinate Zn(2+). The NR C4-type zinc finger occupies C176–C200. The hinge stretch occupies residues K206–S229. Basic and acidic residues predominate over residues Q211–N223. Residues Q211–E233 form a disordered region. An NR LBD domain is found at N232–P463. S264 carries the phosphoserine modification. A Phosphoserine; by MAPK8 and MAPK9 modification is found at S265. 9-cis-retinoate contacts are provided by R321 and A332. The all-trans-retinoate site is built by R321 and A332. The tract at residues R353–G373 is required for nuclear export.

It belongs to the nuclear hormone receptor family. NR2 subfamily. As to quaternary structure, homodimer. Heterodimer with RARA; required for ligand-dependent retinoic acid receptor transcriptional activity. Heterodimer with PPARA (via the leucine-like zipper in the LBD); the interaction is required for PPARA transcriptional activity. Heterodimerizes with PPARG. Heterodimerizes (via NR LBD) with RARB. Heterodimerizes with NR1H4; the heterodimerization enhances the binding affinity for LXXLL motifs from coactivators. Interacts with coactivator NCO6. Interacts with coactivator NCO3. Interacts with coactivator FAM120B. Interacts with coactivator PELP1, SENP6, SFPQ, DNTTIP2 and RNF8. Interacts with PRMT2. Interacts with ASXL1. Interacts with BHLHE40/DEC1, BHLHE41/DEC2, NCOR1 and NCOR2. Interacts in a ligand-dependent fashion with MED1 and NCOA1. Interacts with VDR. Interacts with EP300; the interaction is decreased by 9-cis retinoic acid. Heterodimer (via C-terminus) with NR4A1 (via DNA-binding domain); the interaction is enhanced by 9-cis retinoic acid. NR4A1 competes with EP300 for interaction with RXRA and thereby attenuates EP300 mediated acetylation of RXRA. In the absence of hormonal ligand, interacts with TACC1. Interacts ith IGFBP3. Acetylated by EP300; acetylation enhances DNA binding and transcriptional activity. Post-translationally, phosphorylated on serine and threonine residues mainly in the N-terminal modulating domain. Constitutively phosphorylated on Ser-22 in the presence or absence of ligand. Under stress conditions, hyperphosphorylated by activated JNK on Ser-61, Ser-75, Thr-87 and Ser-265. Phosphorylated on Ser-28, in vitro, by PKA. This phosphorylation is required for repression of cAMP-mediated transcriptional activity of RARA. In terms of processing, ubiquitinated by UBR5, leading to its degradation: UBR5 specifically recognizes and binds ligand-bound RXRA when it is not associated with coactivators (NCOAs). In presence of NCOAs, the UBR5-degron is not accessible, preventing its ubiquitination and degradation. Sumoylation negatively regulates transcriptional activity. Desumoylated specifically by SENP6. In terms of tissue distribution, expressed in macrophages (at protein level).

The protein resides in the nucleus. It is found in the cytoplasm. The protein localises to the mitochondrion. In terms of biological role, receptor for retinoic acid that acts as a transcription factor. Forms homo- or heterodimers with retinoic acid receptors (RARs) and binds to target response elements in response to their ligands, all-trans or 9-cis retinoic acid, to regulate gene expression in various biological processes. The RAR/RXR heterodimers bind to the retinoic acid response elements (RARE) composed of tandem 5'-AGGTCA-3' sites known as DR1-DR5 to regulate transcription. The high affinity ligand for retinoid X receptors (RXRs) is 9-cis retinoic acid. In the absence of ligand, the RXR-RAR heterodimers associate with a multiprotein complex containing transcription corepressors that induce histone deacetylation, chromatin condensation and transcriptional suppression. On ligand binding, the corepressors dissociate from the receptors and coactivators are recruited leading to transcriptional activation. Serves as a common heterodimeric partner for a number of nuclear receptors, such as RARA, RARB and PPARA. The RXRA/RARB heterodimer can act as a transcriptional repressor or transcriptional activator, depending on the RARE DNA element context. The RXRA/PPARA heterodimer is required for PPARA transcriptional activity on fatty acid oxidation genes such as ACOX1 and the P450 system genes. Together with RARA, positively regulates microRNA-10a expression, thereby inhibiting the GATA6/VCAM1 signaling response to pulsatile shear stress in vascular endothelial cells. Acts as an enhancer of RARA binding to RARE DNA element. May facilitate the nuclear import of heterodimerization partners such as VDR and NR4A1. Promotes myelin debris phagocytosis and remyelination by macrophages. Plays a role in the attenuation of the innate immune system in response to viral infections, possibly by negatively regulating the transcription of antiviral genes such as type I IFN genes. Involved in the regulation of calcium signaling by repressing ITPR2 gene expression, thereby controlling cellular senescence. The sequence is that of Retinoic acid receptor RXR-alpha (Rxra) from Mus musculus (Mouse).